The sequence spans 333 residues: Cytochrome f (333 aa).

The first 44 residues, 1-44, serve as a signal peptide directing secretion; the sequence is MRNASVTARLTRSVRAIVKTLLIAIATVTFYFSCDLALPQSAAA. Tyr-45, Cys-66, Cys-69, and His-70 together coordinate heme. The helical transmembrane segment at 301 to 318 threads the bilayer; the sequence is GLIAFVALVMLAQVMLVL.

This sequence belongs to the cytochrome f family. The 4 large subunits of the cytochrome b6-f complex are cytochrome b6, subunit IV (17 kDa polypeptide, PetD), cytochrome f and the Rieske protein, while the 4 small subunits are PetG, PetL, PetM and PetN. The complex functions as a dimer. Requires heme as cofactor.

The protein localises to the cellular thylakoid membrane. In terms of biological role, component of the cytochrome b6-f complex, which mediates electron transfer between photosystem II (PSII) and photosystem I (PSI), cyclic electron flow around PSI, and state transitions. The protein is Cytochrome f (petA) of Desmonostoc sp. (strain PCC 7906) (Nostoc sp. (strain PCC 7906)).